The chain runs to 358 residues: 2'-5'-oligoadenylate synthase 1A (358 aa).

The segment at 14-61 is interaction with dsRNA; that stretch reads DKFIEVYLLPNTSFRDDVKSAINVLCDFLKERCFRDTVHPVRVSKVVK. Ser64 provides a ligand contact to ATP. Positions 76, 78, and 149 each coordinate Mg(2+). The tract at residues 201–211 is interaction with dsRNA; that stretch reads QRPTKLKSLIR. Residues Arg211, Lys214, and Gln231 each coordinate ATP.

The protein belongs to the 2-5A synthase family. As to quaternary structure, monomer. Homotetramer. Interacts with OAS1D. The cofactor is Mg(2+).

The protein resides in the cytoplasm. The protein localises to the mitochondrion. Its subcellular location is the nucleus. It localises to the microsome. It is found in the endoplasmic reticulum. The enzyme catalyses 3 ATP = 5'-triphosphoadenylyl-(2'-&gt;5')-adenylyl-(2'-&gt;5')-adenosine + 2 diphosphate. Produced as a latent enzyme which is activated by dsRNA generated during the course of viral infection. The dsRNA activator must be at least 15 nucleotides long, and no modification of the 2'-hydroxyl group is tolerated. ssRNA or dsDNA do not act as activators. Functionally, interferon-induced, dsRNA-activated antiviral enzyme which plays a critical role in cellular innate antiviral response. In addition, it may also play a role in other cellular processes such as apoptosis, cell growth, differentiation and gene regulation. Synthesizes higher oligomers of 2'-5'-oligoadenylates (2-5A) from ATP which then bind to the inactive monomeric form of ribonuclease L (RNase L) leading to its dimerization and subsequent activation. Activation of RNase L leads to degradation of cellular as well as viral RNA, resulting in the inhibition of protein synthesis, thus terminating viral replication. Can mediate the antiviral effect via the classical RNase L-dependent pathway or an alternative antiviral pathway independent of RNase L. This Rattus norvegicus (Rat) protein is 2'-5'-oligoadenylate synthase 1A (Oas1a).